The chain runs to 300 residues: Ribonuclease HIII (300 aa).

One can recognise an RNase H type-2 domain in the interval 83–300; the sequence is IPIIGSDEVG…THKAQALLTK (218 aa). D89, E90, and D194 together coordinate a divalent metal cation.

It belongs to the RNase HII family. RnhC subfamily. Requires Mn(2+) as cofactor. The cofactor is Mg(2+).

The protein localises to the cytoplasm. It catalyses the reaction Endonucleolytic cleavage to 5'-phosphomonoester.. Functionally, endonuclease that specifically degrades the RNA of RNA-DNA hybrids. The protein is Ribonuclease HIII of Streptococcus pyogenes serotype M1.